Consider the following 32-residue polypeptide: Parigidin-br1 (32 aa).

Positions 1-32 form a cross-link, cyclopeptide (Gly-Asp); sequence GGSVPCGESCVFIPCITSLAGCSCKNKVCYYD. Intrachain disulfides connect C6-C22, C10-C24, and C15-C29.

Post-translationally, this is a cyclic peptide. In terms of tissue distribution, expressed in leaves, flowers, peduncles and seeds (at protein level).

Probably participates in a plant defense mechanism. Reduces growth of and increases mortality in larvae of D.saccharalis. Kills cultured SF-9 cells of S.frugiperda probably by disrupting plasma membranes. Has hemolytic activity against human erythrocytes. Has no antibacterial activity against E.coli strain ATCC 8739 and S.aureus strain ATCC 25923. This Palicourea rigida protein is Parigidin-br1.